The following is a 291-amino-acid chain: uncharacterized protein (291 aa).

A run of 4 helical transmembrane segments spans residues 13 to 33 (IILI…SITI), 84 to 104 (IVLF…IGII), 111 to 131 (LLHL…FIII), and 219 to 239 (LIYC…IYYL).

It is found in the cell membrane. This is an uncharacterized protein from Ureaplasma parvum serovar 3 (strain ATCC 700970).